We begin with the raw amino-acid sequence, 314 residues long: WD repeat domain-containing protein 83 (314 aa).

7 WD repeats span residues 23–62, 65–104, 107–146, 151–188, 189–228, 231–272, and 275–313; these read CNQGAVRAVRFNVDGNYCMTCGSDKTLKLWNPHKGTLLKT, GHGYEVLDTAGSYDNSQMCSCSSDKTVILWDVAQGQVVRK, GHAGKVNCVQFNEEATVIMSGSIDSSIRCWDCRSRRPEAI, EAKDGISSIKISDHEILAGSVDGNLRRYDLRKGEMCAD, YLGSPITCVSFSQDSQCLLASSLDSTLRLLDKDTGELLGE, GHQN…LVLK, and VGKAAVQSLSFHPSECCLLTASEGGVQLWRGASYEEEGG.

Belongs to the WD repeat MORG1 family.

Its subcellular location is the cytoplasm. Its function is as follows. Molecular scaffold protein for various multimeric protein complexes. Acts as a module in the assembly of a multicomponent scaffold for the ERK pathway, linking ERK responses to specific agonists. Also involved in response to hypoxia by acting as a negative regulator of HIF1A/HIF-1-alpha. The sequence is that of WD repeat domain-containing protein 83 (wdr83) from Xenopus tropicalis (Western clawed frog).